The sequence spans 97 residues: uncharacterized protein (97 aa).

This is an uncharacterized protein from Schizosaccharomyces pombe (strain 972 / ATCC 24843) (Fission yeast).